Here is an 89-residue protein sequence, read N- to C-terminus: MATVIAKVKVMPTSPEVEKEALKETLKELVEKNDAKCRGVSDEPLAFGLYTVFVMVEMEEKEGGMDPIEEAMNALENVESAEVVELSLV.

Belongs to the EF-1-beta/EF-1-delta family.

Functionally, promotes the exchange of GDP for GTP in EF-1-alpha/GDP, thus allowing the regeneration of EF-1-alpha/GTP that could then be used to form the ternary complex EF-1-alpha/GTP/AAtRNA. This is Elongation factor 1-beta from Methanococcus maripaludis (strain C6 / ATCC BAA-1332).